A 405-amino-acid polypeptide reads, in one-letter code: Argininosuccinate synthase (405 aa).

9 to 17 (AYSGGLDTS) contributes to the ATP binding site. Residues Tyr87 and Ser92 each coordinate L-citrulline. Gly117 contacts ATP. Residues Thr119, Asn123, and Asp124 each contribute to the L-aspartate site. An L-citrulline-binding site is contributed by Asn123. L-citrulline is bound by residues Arg127, Ser176, Ser185, Glu262, and Tyr274.

The protein belongs to the argininosuccinate synthase family. Type 1 subfamily. In terms of assembly, homotetramer.

The protein resides in the cytoplasm. It carries out the reaction L-citrulline + L-aspartate + ATP = 2-(N(omega)-L-arginino)succinate + AMP + diphosphate + H(+). The protein operates within amino-acid biosynthesis; L-arginine biosynthesis; L-arginine from L-ornithine and carbamoyl phosphate: step 2/3. In Caldicellulosiruptor saccharolyticus (strain ATCC 43494 / DSM 8903 / Tp8T 6331), this protein is Argininosuccinate synthase.